Here is a 137-residue protein sequence, read N- to C-terminus: Large ribosomal subunit protein uL16 (137 aa).

The protein belongs to the universal ribosomal protein uL16 family. Part of the 50S ribosomal subunit.

In terms of biological role, binds 23S rRNA and is also seen to make contacts with the A and possibly P site tRNAs. In Wolbachia pipientis subsp. Culex pipiens (strain wPip), this protein is Large ribosomal subunit protein uL16.